The primary structure comprises 554 residues: Solute carrier family 22 member 1 (554 aa).

Residues 1–21 are Cytoplasmic-facing; it reads MPTVDDILEQVGESGWFQKQA. A helical membrane pass occupies residues 22–42; it reads FLILCLLSAAFAPICVGIVFL. The Extracellular portion of the chain corresponds to 43-149; sequence GFTPDHHCQS…LVCADSWKLD (107 aa). An N-linked (GlcNAc...) asparagine glycan is attached at N71. Residues 150 to 170 form a helical membrane-spanning segment; it reads LFQSCLNAGFLFGSLGVGYFA. Residues 171-176 are Cytoplasmic-facing; sequence DRFGRK. Residues 177-197 form a helical membrane-spanning segment; it reads LCLLGTVLVNAVSGVLMAFSP. At 198 to 206 the chain is on the extracellular side; that stretch reads NYMSMLLFR. The chain crosses the membrane as a helical span at residues 207-229; it reads LLQGLVSKGNWMAGYTLITEFVG. Over 230 to 235 the chain is Cytoplasmic; that stretch reads SGSRRT. The helical transmembrane segment at 236 to 256 threads the bilayer; sequence VAIMYQMAFTVGLVALTGLAY. The Extracellular portion of the chain corresponds to 257-262; sequence ALPHWR. The helical transmembrane segment at 263-283 threads the bilayer; it reads WLQLAVSLPTFLFLLYYWCVP. The short motif at 283–287 is the Proline-rich sequence element; that stretch reads PESPR. Over 284–347 the chain is Cytoplasmic; sequence ESPRWLLSQK…FRTPRLRKRT (64 aa). S333 bears the Phosphoserine mark. Residues 348–368 traverse the membrane as a helical segment; sequence FILMYLWFTDSVLYQGLILHM. Residues 369-376 are Extracellular-facing; that stretch reads GATSGNLY. Residues 377 to 397 form a helical membrane-spanning segment; sequence LDFLYSALVEIPGAFIALITI. The Cytoplasmic portion of the chain corresponds to 398 to 402; that stretch reads DRVGR. The helical transmembrane segment at 403–423 threads the bilayer; that stretch reads IYPMAMSNLLAGAACLVMIFI. The Extracellular portion of the chain corresponds to 424–431; it reads SPDLHWLN. Residues 432–452 form a helical membrane-spanning segment; sequence IIIMCVGRMGITIAIQMICLV. Over 453–464 the chain is Cytoplasmic; sequence NAELYPTFVRNL. The chain crosses the membrane as a helical span at residues 465–485; the sequence is GVMVCSSLCDIGGIITPFIVF. Residues 486–492 lie on the Extracellular side of the membrane; the sequence is RLREVWQ. Residues 493-513 traverse the membrane as a helical segment; sequence ALPLILFAVLGLLAAGVTLLL. The Cytoplasmic portion of the chain corresponds to 514–554; it reads PETKGVALPETMKDAENLGRKAKPKENTIYLKVQTSEPSGT. The residue at position 541 (T541) is a Phosphothreonine.

It belongs to the major facilitator (TC 2.A.1) superfamily. Organic cation transporter (TC 2.A.1.19) family. Phosphorylated. Widely expressed with high level in liver. In liver, expressed around the central vein. Expressed in kidney. Expressed in small intestine enterocytes. Localized to peritubular myoid cells, Leydig cells and moderately to the basal membrane of Sertoli cells in testes. Expressed in tracheal and bronchial ciliated epithelium in the respiratory tract. Also expressed in skeletal muscle, stomach, spleen, heart, placentacolon, brain, granulycytes and lympohocytes. As to expression, expressed in liver and in glial cell lines. In terms of tissue distribution, expressed in glial cell lines. Not expressed in liver.

Its subcellular location is the basolateral cell membrane. It is found in the apical cell membrane. The protein localises to the lateral cell membrane. It localises to the basal cell membrane. The protein resides in the cell membrane. The catalysed reaction is 1-methylnicotinamide(out) = 1-methylnicotinamide(in). The enzyme catalyses dopamine(out) = dopamine(in). It catalyses the reaction serotonin(out) = serotonin(in). It carries out the reaction (R)-adrenaline(out) = (R)-adrenaline(in). The catalysed reaction is histamine(out) = histamine(in). The enzyme catalyses guanidine(out) = guanidine(in). It catalyses the reaction acetylcholine(in) = acetylcholine(out). It carries out the reaction thiamine(in) = thiamine(out). The catalysed reaction is agmatine(out) = agmatine(in). The enzyme catalyses putrescine(out) = putrescine(in). It catalyses the reaction spermidine(in) = spermidine(out). It carries out the reaction L-histidyl-L-proline diketopiperazine(in) = L-histidyl-L-proline diketopiperazine(out). The catalysed reaction is (R)-salsolinol(in) = (R)-salsolinol(out). The enzyme catalyses prostaglandin F2alpha(out) = prostaglandin F2alpha(in). It catalyses the reaction prostaglandin E2(out) = prostaglandin E2(in). Its activity is regulated as follows. Phosphorylation of the transporter leads to changes in its substrate affinity, resulting in a regulation of the transport activity. In contrast with rat ortholog, ASP uptake is inhibited by protein kinase A (PKA) and C (PKC) activation. ASP uptake is also endogenously activated by calmodulin, the calmodulin-dependent kinase II and LCK tyrosine kinase. Inhibited by cGMP, most likely through a cGMP-binding protein that interacts with OCT1. Its function is as follows. Electrogenic voltage-dependent transporter that mediates the transport of a variety of organic cations such as endogenous bioactive amines, cationic drugs and xenobiotics. Functions as a pH- and Na(+)-independent, bidirectional transporter. Cation cellular uptake or release is driven by the electrochemical potential (i.e. membrane potential and concentration gradient) and substrate selectivity. Hydrophobicity is a major requirement for recognition in polyvalent substrates and inhibitors. Primarily expressed at the basolateral membrane of hepatocytes and proximal tubules and involved in the uptake and disposition of cationic compounds by hepatic and renal clearance from the blood flow. Most likely functions as an uptake carrier in enterocytes contributing to the intestinal elimination of organic cations from the systemic circulation. Transports endogenous monoamines such as N-1-methylnicotinamide (NMN), guanidine, histamine, neurotransmitters dopamine, serotonin and adrenaline. Also transports natural polyamines such as spermidine, agmatine and putrescine at low affinity, but relatively high turnover. Involved in the hepatic uptake of vitamin B1/thiamine, hence regulating hepatic lipid and energy metabolism. Mediates the bidirectional transport of acetylcholine (ACh) at the apical membrane of ciliated cell in airway epithelium, thereby playing a role in luminal release of ACh from bronchial epithelium. Transports dopaminergic neuromodulators cyclo(his-pro) and salsolinol with lower efficency. Also capable of transporting non-amine endogenous compounds such as prostaglandin E2 (PGE2) and prostaglandin F2-alpha (PGF2-alpha). May contribute to the transport of cationic compounds in testes across the blood-testis-barrier. Also involved in the uptake of xenobiotics tributylmethylammonium (TBuMA), quinidine, N-methyl-quinine (NMQ), N-methyl-quinidine (NMQD) N-(4,4-azo-n-pentyl)-quinuclidine (APQ), azidoprocainamide methoiodide (AMP), N-(4,4-azo-n-pentyl)-21-deoxyajmalinium (APDA) and 4-(4-(dimethylamino)styryl)-N-methylpyridinium (ASP). Functionally, mediates the uptake of 1-methyl-4-phenylpyridinium (MPP(+)). Not able to uptake 1-methyl-4-phenylpyridinium (MPP(+)). This Homo sapiens (Human) protein is Solute carrier family 22 member 1.